The sequence spans 206 residues: LexA repressor (206 aa).

A DNA-binding region (H-T-H motif) is located at residues 28–48; the sequence is RAEIARELGFRSANAAEEHLK. Active-site for autocatalytic cleavage activity residues include serine 123 and lysine 160.

It belongs to the peptidase S24 family. In terms of assembly, homodimer.

It catalyses the reaction Hydrolysis of Ala-|-Gly bond in repressor LexA.. Its function is as follows. Represses a number of genes involved in the response to DNA damage (SOS response), including recA and lexA. In the presence of single-stranded DNA, RecA interacts with LexA causing an autocatalytic cleavage which disrupts the DNA-binding part of LexA, leading to derepression of the SOS regulon and eventually DNA repair. This Vibrio parahaemolyticus serotype O3:K6 (strain RIMD 2210633) protein is LexA repressor.